The primary structure comprises 316 residues: Polyprenyl transferase dpchC (316 aa).

Helical transmembrane passes span Pro-24–Ala-44, Ala-60–Ile-80, Glu-105–Leu-125, Met-154–Gly-174, Cys-192–Tyr-212, Ile-234–Phe-254, Ser-258–Val-278, and Phe-296–Ala-316.

It belongs to the UbiA prenyltransferase family. It depends on Mg(2+) as a cofactor.

It localises to the membrane. The protein operates within secondary metabolite biosynthesis; terpenoid biosynthesis. In terms of biological role, polyprenyl transferase; part of the gene cluster that mediates the biosynthesis of the diterpenoid pyrones higginsianins A and B. The first step of the pathway is the synthesis of the alpha-pyrone moiety by the polyketide synthase dpchA via condensation of one acetyl-CoA starter unit with 3 malonyl-CoA units and 2 methylations. The alpha-pyrone is then combined with geranylgeranyl pyrophosphate (GGPP) formed by the GGPP synthase dpchD through the action of the prenyltransferase dpchC to yield a linear alpha-pyrone diterpenoid. Subsequent steps in the diterpenoid pyrone biosynthetic pathway involve the decalin core formation, which is initiated by the epoxidation of the C10-C11 olefin by the FAD-dependent oxidoreductase dpchE, and is followed by a cyclization cascade catalyzed by the terpene cyclase dpchB. The short chain dehydrogenase/reductase dpchG then oxidizes the 8S hydroxy group to a ketone and the short chain dehydrogenase/reductase dpchH reduces the ketone to the 8R hydroxy group to yield higginsianin B. Finally, the FAD-dependent oxidoreductase dpchF converts higginsianin B into higginsianin A. The polypeptide is Polyprenyl transferase dpchC (Colletotrichum higginsianum (strain IMI 349063) (Crucifer anthracnose fungus)).